We begin with the raw amino-acid sequence, 278 residues long: Non-haem bromoperoxidase BPO-A2 (278 aa).

An AB hydrolase-1 domain is found at 26–264; sequence PVVLIHGFPL…GAPHGLLWTH (239 aa). Catalysis depends on residues Ser-99, Asp-229, and His-258.

The protein belongs to the AB hydrolase superfamily. Bacterial non-heme haloperoxidase / perhydrolase family. In terms of assembly, homotrimer.

In terms of biological role, may be a chlorinating enzyme involved in 7-chlorotetracycline biosynthesis. The sequence is that of Non-haem bromoperoxidase BPO-A2 (bpoA2) from Kitasatospora aureofaciens (Streptomyces aureofaciens).